The primary structure comprises 611 residues: Autophagy-related protein 22-2 (611 aa).

The segment at 1–24 is disordered; the sequence is MRADDNPSARSLHAQFPGDDTRPT. The helical transmembrane segment at 35–55 threads the bilayer; that stretch reads YGWAAEVFTVCAMGSFLPITL. Asn78 carries an N-linked (GlcNAc...) asparagine glycan. The next 3 helical transmembrane spans lie at 116–136, 151–171, and 175–195; these read TASF…VLII, LLVA…SVVP, and IVGA…FVLL. An N-linked (GlcNAc...) asparagine glycan is attached at Asn221. 2 helical membrane-spanning segments follow: residues 286–306 and 316–336; these read IGIG…VIIA and LVLF…ALWL. A glycan (N-linked (GlcNAc...) asparagine) is linked at Asn353. Transmembrane regions (helical) follow at residues 380 to 400, 414 to 434, 449 to 469, 483 to 503, 521 to 541, and 551 to 571; these read ILLF…VSGT, AALG…AFSW, IIAC…GFVP, WEMF…SSYC, ALYA…VGLI, and AFVF…LVDV.

This sequence belongs to the ATG22 family.

The protein localises to the vacuole membrane. Functionally, vacuolar effluxer which mediate the efflux of amino acids resulting from autophagic degradation. The release of autophagic amino acids allows the maintenance of protein synthesis and viability during nitrogen starvation. In Aspergillus clavatus (strain ATCC 1007 / CBS 513.65 / DSM 816 / NCTC 3887 / NRRL 1 / QM 1276 / 107), this protein is Autophagy-related protein 22-2 (atg22-2).